We begin with the raw amino-acid sequence, 100 residues long: Small ribosomal subunit protein uS14c (100 aa).

Belongs to the universal ribosomal protein uS14 family. As to quaternary structure, part of the 30S ribosomal subunit.

Its subcellular location is the plastid. The protein resides in the chloroplast. In terms of biological role, binds 16S rRNA, required for the assembly of 30S particles. The polypeptide is Small ribosomal subunit protein uS14c (Oenothera argillicola (Appalachian evening primrose)).